A 471-amino-acid chain; its full sequence is Putative multidrug resistance protein MdtD (471 aa).

The Periplasmic segment spans residues 1-11 (MTDLPDSTRWQ). Residues 12 to 32 (LWIVAFGFFMQSLDTTIVNTA) traverse the membrane as a helical segment. Over 33 to 48 (LPSMAQSLGESPLHMH) the chain is Cytoplasmic. A helical membrane pass occupies residues 49-69 (MVIVSYVLTVAVMLPASGWLA). The Periplasmic portion of the chain corresponds to 70–76 (DKVGVRN). Residues 77-97 (IFFTAIVLFTLGSLFCALSGT) traverse the membrane as a helical segment. Residues 98 to 101 (LNEL) lie on the Cytoplasmic side of the membrane. Residues 102–124 (LLARALQGVGGAMMVPVGRLTVM) form a helical membrane-spanning segment. Residues 125–137 (KIVPREQYMAAMT) are Periplasmic-facing. A helical membrane pass occupies residues 138–158 (FVTLPGQVGPLLGPALGGLLV). Topologically, residues 159–164 (EYASWH) are cytoplasmic. Residues 165 to 185 (WIFLINIPVGIIGAIATLMLM) form a helical membrane-spanning segment. The Periplasmic portion of the chain corresponds to 186 to 196 (PNYTMQTRRFD). The helical transmembrane segment at 197 to 217 (LSGFLLLAVGMAVLTLALDGS) threads the bilayer. Over 218–224 (KGTGFSP) the chain is Cytoplasmic. Residues 225 to 245 (LAIAGLVAVGVVALVLYLLHA) traverse the membrane as a helical segment. The Periplasmic portion of the chain corresponds to 246 to 262 (QNNNRALFSLKLFRTRN). The helical transmembrane segment at 263 to 283 (FSLGLAGSFAGRIGSGMLPFM) threads the bilayer. The Cytoplasmic portion of the chain corresponds to 284 to 285 (TP). A helical transmembrane segment spans residues 286–306 (VFLQIGLGFSPFHAGLMMIPM). The Periplasmic segment spans residues 307 to 341 (VLGSMGMKRIVVQVVNRFGYRRVLVATTLGLSLVT). Residues 342–362 (LLFMTTALLGWYYVLPFVLFL) form a helical membrane-spanning segment. Topologically, residues 363-395 (QGMVNSTRFSSMNTLTLKDLPDNLASSGNSLLS) are cytoplasmic. A helical transmembrane segment spans residues 396 to 416 (MIMQLSMSIGVTIAGLLLGLF). The Periplasmic portion of the chain corresponds to 417 to 430 (GSQHVSVDSGTTQT). A helical transmembrane segment spans residues 431-451 (VFMYTWLSMAFIIALPAFVFA). The Cytoplasmic segment spans residues 452 to 471 (RVPSDTHQNVAISRRKRSAQ).

Belongs to the major facilitator superfamily. TCR/Tet family.

It is found in the cell inner membrane. The chain is Putative multidrug resistance protein MdtD from Escherichia coli O1:K1 / APEC.